Here is a 468-residue protein sequence, read N- to C-terminus: Chromosomal replication initiator protein DnaA (468 aa).

The interval 1 to 84 (MSSSLWLQCL…RFEVGSRPVS (84 aa)) is domain I, interacts with DnaA modulators. Residues 80-106 (SRPVSAPKPAPTRTPADVAAESSAPAQ) form a disordered region. A domain II region spans residues 84–131 (SAPKPAPTRTPADVAAESSAPAQLQARKPVHKTWDDDPQAIAAINHRS). Residues 132–348 (NMNPKHKFDN…GALNRVIANA (217 aa)) form a domain III, AAA+ region region. Residues glycine 176, glycine 178, lysine 179, and threonine 180 each coordinate ATP. Positions 349–468 (NFTGRPITID…YSNLIRTLSS (120 aa)) are domain IV, binds dsDNA.

It belongs to the DnaA family. Oligomerizes as a right-handed, spiral filament on DNA at oriC.

It is found in the cytoplasm. Plays an essential role in the initiation and regulation of chromosomal replication. ATP-DnaA binds to the origin of replication (oriC) to initiate formation of the DNA replication initiation complex once per cell cycle. Binds the DnaA box (a 9 base pair repeat at the origin) and separates the double-stranded (ds)DNA. Forms a right-handed helical filament on oriC DNA; dsDNA binds to the exterior of the filament while single-stranded (ss)DNA is stabiized in the filament's interior. The ATP-DnaA-oriC complex binds and stabilizes one strand of the AT-rich DNA unwinding element (DUE), permitting loading of DNA polymerase. After initiation quickly degrades to an ADP-DnaA complex that is not apt for DNA replication. Binds acidic phospholipids. The polypeptide is Chromosomal replication initiator protein DnaA (Vibrio parahaemolyticus serotype O3:K6 (strain RIMD 2210633)).